Here is a 299-residue protein sequence, read N- to C-terminus: Ribosomal protein L11 methyltransferase (299 aa).

4 residues coordinate S-adenosyl-L-methionine: threonine 149, glycine 170, aspartate 192, and asparagine 234.

Belongs to the methyltransferase superfamily. PrmA family.

Its subcellular location is the cytoplasm. It carries out the reaction L-lysyl-[protein] + 3 S-adenosyl-L-methionine = N(6),N(6),N(6)-trimethyl-L-lysyl-[protein] + 3 S-adenosyl-L-homocysteine + 3 H(+). Methylates ribosomal protein L11. This is Ribosomal protein L11 methyltransferase from Chromohalobacter salexigens (strain ATCC BAA-138 / DSM 3043 / CIP 106854 / NCIMB 13768 / 1H11).